The sequence spans 327 residues: DNA-directed RNA polymerase subunit alpha (327 aa).

The tract at residues 1 to 227 is alpha N-terminal domain (alpha-NTD); the sequence is MLIAHRPTLI…ELFGLARELN (227 aa). The tract at residues 244–327 is alpha C-terminal domain (alpha-CTD); it reads SDEDLRIPIE…GSYFDPNYGS (84 aa).

The protein belongs to the RNA polymerase alpha chain family. As to quaternary structure, homodimer. The RNAP catalytic core consists of 2 alpha, 1 beta, 1 beta' and 1 omega subunit. When a sigma factor is associated with the core the holoenzyme is formed, which can initiate transcription.

The enzyme catalyses RNA(n) + a ribonucleoside 5'-triphosphate = RNA(n+1) + diphosphate. In terms of biological role, DNA-dependent RNA polymerase catalyzes the transcription of DNA into RNA using the four ribonucleoside triphosphates as substrates. The sequence is that of DNA-directed RNA polymerase subunit alpha from Tropheryma whipplei (strain TW08/27) (Whipple's bacillus).